The primary structure comprises 172 residues: Large ribosomal subunit protein uL10 (172 aa).

It belongs to the universal ribosomal protein uL10 family. In terms of assembly, part of the ribosomal stalk of the 50S ribosomal subunit. The N-terminus interacts with L11 and the large rRNA to form the base of the stalk. The C-terminus forms an elongated spine to which L12 dimers bind in a sequential fashion forming a multimeric L10(L12)X complex.

Its function is as follows. Forms part of the ribosomal stalk, playing a central role in the interaction of the ribosome with GTP-bound translation factors. This is Large ribosomal subunit protein uL10 from Chlamydia trachomatis serovar A (strain ATCC VR-571B / DSM 19440 / HAR-13).